The primary structure comprises 435 residues: Casein kinase I homolog 2 (435 aa).

Positions 12-282 constitute a Protein kinase domain; it reads YRVGRKIGEG…FLQELFDDVL (271 aa). ATP-binding positions include 18–26 and lysine 41; that span reads IGEGSFGVI. Aspartate 131 serves as the catalytic Proton acceptor. Position 361 is a phosphoserine (serine 361).

The protein belongs to the protein kinase superfamily. CK1 Ser/Thr protein kinase family. Casein kinase I subfamily.

The protein resides in the cytoplasm. The catalysed reaction is L-seryl-[protein] + ATP = O-phospho-L-seryl-[protein] + ADP + H(+). The enzyme catalyses L-threonyl-[protein] + ATP = O-phospho-L-threonyl-[protein] + ADP + H(+). Functionally, casein kinases are operationally defined by their preferential utilization of acidic proteins such as caseins as substrates. May contribute to the regulation of morphology. This chain is Casein kinase I homolog 2 (cki2), found in Schizosaccharomyces pombe (strain 972 / ATCC 24843) (Fission yeast).